The following is a 435-amino-acid chain: Probable long-chain-alcohol O-fatty-acyltransferase 11 (435 aa).

11 consecutive transmembrane segments (helical) span residues 7 to 27 (NLIK…YVPT), 36 to 56 (FLSV…FASV), 59 to 79 (SGYT…LFSF), 120 to 140 (PIEV…SVVL), 149 to 169 (IYPI…LEIL), 200 to 220 (DFWG…DVYA), 238 to 258 (LGVF…FFYI), 263 to 283 (PTGE…AYDA), 300 to 320 (CLIL…WLFF), 363 to 383 (FFTG…IGFV), and 406 to 426 (FFIG…IGFV).

This sequence belongs to the wax synthase family.

The protein localises to the membrane. The catalysed reaction is a long chain fatty alcohol + a fatty acyl-CoA = a wax ester + CoA. Its function is as follows. Catalyzes the final step in the synthesis of long-chain linear esters (waxes). This is Probable long-chain-alcohol O-fatty-acyltransferase 11 from Arabidopsis thaliana (Mouse-ear cress).